A 259-amino-acid polypeptide reads, in one-letter code: Leucine-rich repeat-containing protein 61 (259 aa).

LRR repeat units lie at residues 54–75, 76–97, and 98–119; these read NLEW…ASLR, QLAV…AACE, and NLQS…QCLA. An LRRCT domain is found at 138-178; the sequence is NPLCANASYWAVVRELLPGLKVIDGERVSGRGSELYQLCRD.

The chain is Leucine-rich repeat-containing protein 61 (Lrrc61) from Mus musculus (Mouse).